The sequence spans 196 residues: Large ribosomal subunit protein bL9 (196 aa).

The protein belongs to the bacterial ribosomal protein bL9 family.

Functionally, binds to the 23S rRNA. The chain is Large ribosomal subunit protein bL9 from Bradyrhizobium sp. (strain ORS 278).